The following is a 116-amino-acid chain: Iron-sulfur cluster insertion protein ErpA (116 aa).

Iron-sulfur cluster-binding residues include C44, C108, and C110.

The protein belongs to the HesB/IscA family. Homodimer. Iron-sulfur cluster is required as a cofactor.

Required for insertion of 4Fe-4S clusters for at least IspG. This chain is Iron-sulfur cluster insertion protein ErpA, found in Pseudomonas fluorescens (strain ATCC BAA-477 / NRRL B-23932 / Pf-5).